A 355-amino-acid polypeptide reads, in one-letter code: Uroporphyrinogen decarboxylase (355 aa).

Substrate contacts are provided by residues 27 to 31, Asp-77, Tyr-154, Thr-209, and His-328; that span reads RQAGR.

Belongs to the uroporphyrinogen decarboxylase family. In terms of assembly, homodimer.

It is found in the cytoplasm. It carries out the reaction uroporphyrinogen III + 4 H(+) = coproporphyrinogen III + 4 CO2. The protein operates within porphyrin-containing compound metabolism; protoporphyrin-IX biosynthesis; coproporphyrinogen-III from 5-aminolevulinate: step 4/4. Functionally, catalyzes the decarboxylation of four acetate groups of uroporphyrinogen-III to yield coproporphyrinogen-III. This chain is Uroporphyrinogen decarboxylase, found in Aliivibrio fischeri (strain ATCC 700601 / ES114) (Vibrio fischeri).